The primary structure comprises 500 residues: Keratin, type II cuticular Hb1 (500 aa).

Residues 1-106 form a head region; the sequence is MTCGSGFRGR…PNAQCVKQEE (106 aa). The region spanning 106–417 is the IF rod domain; it reads EKEQIKCLNN…RLLEGEEQRL (312 aa). Positions 107–141 are coil 1A; sequence KEQIKCLNNRFAAFIDKVRFLEQQNKLLETKLQFY. The interval 142–151 is linker 1; sequence QNRQCCESNL. The coil 1B stretch occupies residues 152 to 252; sequence EPLFNGYIET…YEEEIRVLQA (101 aa). A Glycyl lysine isopeptide (Lys-Gly) (interchain with G-Cter in SUMO1) cross-link involves residue K212. The interval 253-269 is linker 12; sequence HISDTSVIVKMDNSRDL. The segment at 270-413 is coil 2; the sequence is NMDNIVAEIK…ATYRRLLEGE (144 aa). Residues 414-500 form a tail region; it reads EQRLCEGVGS…GSCASVCRKC (87 aa).

It belongs to the intermediate filament family. Heterotetramer of two type I and two type II keratins.

This is Keratin, type II cuticular Hb1 from Bos taurus (Bovine).